We begin with the raw amino-acid sequence, 147 residues long: Protein Turandot Z (147 aa).

The signal sequence occupies residues 1 to 23 (MYFAIRLSFVLAVLICLTGNGSA).

It belongs to the Turandot family.

It localises to the secreted. Its function is as follows. A humoral factor that may play a role in stress tolerance. This chain is Protein Turandot Z, found in Drosophila melanogaster (Fruit fly).